An 887-amino-acid polypeptide reads, in one-letter code: Cadherin-1 (887 aa).

An N-terminal signal peptide occupies residues 1-26; that stretch reads MGRRWGSPALQRFPVLVLLLLLQVCG. Positions 27 to 160 are excised as a propeptide; sequence RRCDEAAPCQ…DPGFLRRQKR (134 aa). 5 Cadherin domains span residues 161–268, 269–381, 382–493, 494–599, and 600–704; these read DWVI…KPVF, IKEV…IPIF, NPTM…PPVF, VPPI…DNGP, and TPEP…RRSY. The Extracellular segment spans residues 161–714; that stretch reads DWVIPPISCL…IVGGLGVPAI (554 aa). Asp-263 provides a ligand contact to Ca(2+). A glycan (N-linked (GlcNAc...) asparagine) is linked at Asn-291. Asp-294 provides a ligand contact to Ca(2+). N-linked (GlcNAc...) asparagine glycosylation is present at Asn-346. Residues Asn-564 and Asn-643 are each glycosylated (N-linked (GlcNAc...) asparagine). Residues 715 to 735 traverse the membrane as a helical segment; the sequence is LGILGGILALLILLLLLLLFA. Over 736 to 887 the chain is Cytoplasmic; the sequence is RRRKVEKEPL…ELYGGGEDDE (152 aa). The tract at residues 745 to 770 is disordered; that stretch reads LLPPEDDMRDNVYNYDEEGGGEEDQD. Positions 759–770 are enriched in acidic residues; sequence YDEEGGGEEDQD.

As to quaternary structure, homodimer. Interacts with CTNNA2. Expressed in the liver.

The protein resides in the cell junction. Its subcellular location is the adherens junction. It is found in the cell membrane. It localises to the endosome. The protein localises to the golgi apparatus. The protein resides in the trans-Golgi network. Its subcellular location is the cytoplasm. It is found in the desmosome. Its function is as follows. Cadherins are calcium-dependent cell adhesion proteins. They preferentially interact with themselves in a homophilic manner in connecting cells; cadherins may thus contribute to the sorting of heterogeneous cell types. Promotes organization of radial actin fiber structure and cellular response to contractile forces, via anchoring of radial actin fibers to CDH1 junction complexes at the cell membrane. E-cadherin is a ligand for integrin alpha-E/beta-7. The chain is Cadherin-1 (CDH1) from Gallus gallus (Chicken).